The primary structure comprises 239 residues: Endonuclease V (239 aa).

The Mg(2+) site is built by D48 and D116.

This sequence belongs to the endonuclease V family. Mg(2+) is required as a cofactor.

It is found in the cytoplasm. It catalyses the reaction Endonucleolytic cleavage at apurinic or apyrimidinic sites to products with a 5'-phosphate.. DNA repair enzyme involved in the repair of deaminated bases. Selectively cleaves double-stranded DNA at the second phosphodiester bond 3' to a deoxyinosine leaving behind the intact lesion on the nicked DNA. The chain is Endonuclease V from Xanthomonas oryzae pv. oryzae (strain MAFF 311018).